The primary structure comprises 498 residues: Probable malate:quinone oxidoreductase 2 (498 aa).

It belongs to the MQO family. The cofactor is FAD.

The catalysed reaction is (S)-malate + a quinone = a quinol + oxaloacetate. The protein operates within carbohydrate metabolism; tricarboxylic acid cycle; oxaloacetate from (S)-malate (quinone route): step 1/1. The protein is Probable malate:quinone oxidoreductase 2 of Staphylococcus aureus (strain COL).